Consider the following 212-residue polypeptide: uncharacterized protein (212 aa).

The protein belongs to the mimivirus R683/R861 family.

This is an uncharacterized protein from Acanthamoeba polyphaga (Amoeba).